Reading from the N-terminus, the 285-residue chain is Sulfotransferase 2A1 (285 aa).

Residues Lys44, Ser45, Gly46, Thr47, Asn48, and Trp49 each contribute to the 3'-phosphoadenylyl sulfate site. His99 serves as the catalytic Proton acceptor. 3'-phosphoadenylyl sulfate is bound by residues Arg121, Ser129, Tyr184, Ser218, Met223, Arg247, Lys248, and Gly249. Ser251 is subject to Phosphoserine.

Belongs to the sulfotransferase 1 family. As to quaternary structure, homodimer. Predominanly expressed in liver. Detected also in adrenal gland and in jejunum.

Its subcellular location is the cytoplasm. The protein resides in the cytosol. It carries out the reaction an alcohol + 3'-phosphoadenylyl sulfate = an alkyl sulfate + adenosine 3',5'-bisphosphate + H(+). It catalyses the reaction 3beta-hydroxyandrost-5-en-17-one + 3'-phosphoadenylyl sulfate = dehydroepiandrosterone 3-sulfate + adenosine 3',5'-bisphosphate + H(+). The enzyme catalyses taurolithocholate + 3'-phosphoadenylyl sulfate = taurolithocholate 3-sulfate + adenosine 3',5'-bisphosphate + H(+). The catalysed reaction is lithocholate + 3'-phosphoadenylyl sulfate = lithocholate sulfate + adenosine 3',5'-bisphosphate + H(+). It carries out the reaction (24S)-hydroxycholesterol + 3'-phosphoadenylyl sulfate = (24S)-hydroxycholesterol 24-sulfate + adenosine 3',5'-bisphosphate + H(+). It catalyses the reaction (24S)-hydroxycholesterol + 3'-phosphoadenylyl sulfate = (24S)-hydroxycholesterol 3-sulfate + adenosine 3',5'-bisphosphate + H(+). The enzyme catalyses (24S)-hydroxycholesterol 24-sulfate + 3'-phosphoadenylyl sulfate = (24S)-hydroxycholesterol 3,24-disulfate + adenosine 3',5'-bisphosphate + H(+). The catalysed reaction is pregnenolone + 3'-phosphoadenylyl sulfate = pregnenolone sulfate + adenosine 3',5'-bisphosphate + H(+). It carries out the reaction androsterone + 3'-phosphoadenylyl sulfate = androsterone 3alpha-sulfate + adenosine 3',5'-bisphosphate + H(+). Its function is as follows. Sulfotransferase that utilizes 3'-phospho-5'-adenylyl sulfate (PAPS) as sulfonate donor to catalyze the sulfonation of steroids and bile acids in the liver and adrenal glands. Mediates the sulfation of a wide range of steroids and sterols, including pregnenolone, androsterone, DHEA, bile acids, cholesterol and as well many xenobiotics that contain alcohol and phenol functional groups. Sulfonation increases the water solubility of most compounds, and therefore their renal excretion, but it can also result in bioactivation to form active metabolites. Plays an important role in maintening steroid and lipid homeostasis. Plays a key role in bile acid metabolism. In addition, catalyzes the metabolic activation of potent carcinogenic polycyclic arylmethanols. This Macaca fascicularis (Crab-eating macaque) protein is Sulfotransferase 2A1 (SULT2A1).